A 67-amino-acid polypeptide reads, in one-letter code: Small ribosomal subunit protein eS27 (67 aa).

Residues Cys22, Cys25, Cys41, and Cys44 each coordinate Zn(2+). The C4-type zinc finger occupies 22–44 (CPDCGNEQVTFSHAAMVVRCLVC).

This sequence belongs to the eukaryotic ribosomal protein eS27 family. Part of the 30S ribosomal subunit. The cofactor is Zn(2+).

This chain is Small ribosomal subunit protein eS27, found in Pyrobaculum calidifontis (strain DSM 21063 / JCM 11548 / VA1).